A 4239-amino-acid chain; its full sequence is Tenellin synthetase (4239 aa).

The Ketosynthase family 3 (KS3) domain occupies S15–R454. Active-site for beta-ketoacyl synthase activity residues include C189, H326, and H374. A malonyl-CoA:ACP transacylase (MAT) domain region spans residues V589 to A923. The tract at residues H993–K1135 is N-terminal hotdog fold. Residues H993 to P1310 form a dehydratase (DH) domain region. Residues H993–S1313 form the PKS/mFAS DH domain. The active-site Proton acceptor; for dehydratase activity is the H1025. Residues L1158–S1313 are C-terminal hotdog fold. D1217 acts as the Proton donor; for dehydratase activity in catalysis. The tract at residues R1459–D1652 is methyltransferase (MT) domain. Residues T2209 to V2382 are ketoreductase (KR) domain. Residues E2502 to A2582 enclose the Carrier 1 domain. At S2542 the chain carries O-(pantetheine 4'-phosphoryl)serine. Disordered regions lie at residues K2587–Q2629 and L2642–Q2712. Composition is skewed to polar residues over residues G2648 to S2662 and E2670 to E2681. A compositionally biased stretch (low complexity) spans S2682–N2698. The segment at R2723–V3169 is condensation (C) domain. The tract at residues C3203 to I3614 is adenylation (A) (KR) domain. The disordered stretch occupies residues E3728 to K3752. The span at A3729–P3745 shows a compositional bias: low complexity. Positions E3751–R3835 constitute a Carrier 2 domain. S3795 carries the O-(pantetheine 4'-phosphoryl)serine modification. A disordered region spans residues E3862–T3892. The segment covering S3867–S3885 has biased composition (low complexity). The segment at L3899–V4145 is reductase (RED) domain.

In the C-terminal section; belongs to the NRP synthetase family.

It functions in the pathway secondary metabolite biosynthesis. Hybrid PKS-NRPS synthetase; part of the gene cluster that mediates the biosynthesis of tenellin-type 2-pyridones, iron-chelating compounds involved in iron stress tolerance, competition with the natural competitor fungus Metarhizium robertsii and insect hosts infection. TenS catalyzes the assembly of the polyketide-amino acid backbone. Because tenS lacks a designated enoylreductase (ER) domain, the required activity is provided the enoyl reductase tenC. Upon formation of the polyketide backbone on the thiotemplate, the triketide is transferred to the NRPS module and linked to tyrosine to produce the pyrrolidine-2-dione intermediates, including pretellinin A, 11-hydropretellenin A, 12-hydropretellenin A, 13-hydropretellenin A, 14-hydropretellenin A, 12-oxopretellenin A and prototellinin D. The pathway begins with the assembly of the polyketide-amino acid backbone by the hybrid PKS-NRPS tenS with the help of the enoyl reductase tenC. These enzymes catalyze the synthesis of the pyrrolidine-2-dione intermediates pretellinin A, 11-hydropretellenin A, 12-hydropretellenin A, 13-hydropretellenin A, 14-hydropretellenin A, 12-oxopretellenin A and prototellinin D. The cytochrome P450 monooxygenase tenA then catalyzes an oxidative ring expansion of pretenellin A and 14-hydropretellenin A to form the 2-pyridone core, leading to pretenellin B and pyridovericin, respectively. The cytochrome P450 monooxygenase tenB is then required for the selective N-hydroxylation of the 2-pyridone nitrogen of yield tellinin and 15-hydroxytellenin (15-HT), respectively. The UDP-glucosyltransferase GT1 and the methyltransferase MT1, located outside the tenS gene cluster, contribute to the stepwise glycosylation and methylation of 15-HT to obtain the glycoside pyridovericin-N-O-(4-O-methyl-beta-D-glucopyranoside) (PMGP). Additional related compounds such as 1-O-methyl-15-HT, (8Z)-1-O-methyl-15-HT, and O-methyltenellin A are also produced but the enzymes involved in their biosynthesis have still to be determined. The protein is Tenellin synthetase of Beauveria bassiana (White muscardine disease fungus).